Reading from the N-terminus, the 263-residue chain is Kallikrein 1-related peptidase b24 (263 aa).

An N-terminal signal peptide occupies residues 1-17 (MWFLILFLALSLGGIDA). A propeptide spans 18–24 (APPVQSR) (activation peptide). The Peptidase S1 domain occupies 25–260 (VVGGFKCEKN…FASWIKDTMA (236 aa)). 5 cysteine pairs are disulfide-bonded: C31–C175, C50–C66, C154–C221, C186–C200, and C211–C236. H65 functions as the Charge relay system in the catalytic mechanism. N-linked (GlcNAc...) asparagine glycosylation is found at N69 and N105. Catalysis depends on D122, which acts as the Charge relay system. Residue N185 is glycosylated (N-linked (GlcNAc...) asparagine). S215 serves as the catalytic Charge relay system.

Belongs to the peptidase S1 family. Kallikrein subfamily.

It catalyses the reaction Preferential cleavage of Arg-|-Xaa bonds in small molecule substrates. Highly selective action to release kallidin (lysyl-bradykinin) from kininogen involves hydrolysis of Met-|-Xaa or Leu-|-Xaa.. Glandular kallikreins cleave Met-Lys and Arg-Ser bonds in kininogen to release Lys-bradykinin. In Mus musculus (Mouse), this protein is Kallikrein 1-related peptidase b24 (Klk1b24).